The following is a 459-amino-acid chain: NADP-specific glutamate dehydrogenase (459 aa).

K114 is an active-site residue.

Belongs to the Glu/Leu/Phe/Val dehydrogenases family. As to quaternary structure, homohexamer.

It carries out the reaction L-glutamate + NADP(+) + H2O = 2-oxoglutarate + NH4(+) + NADPH + H(+). The protein is NADP-specific glutamate dehydrogenase (gdhA) of Emericella nidulans (strain FGSC A4 / ATCC 38163 / CBS 112.46 / NRRL 194 / M139) (Aspergillus nidulans).